The following is a 705-amino-acid chain: FAD-dependent monooxygenase ATEG_03635 (705 aa).

Residues 86-115 (DVLI…IVDK), Val-208, 308-310 (RFY), and Ser-408 contribute to the FAD site.

The protein belongs to the PheA/TfdB FAD monooxygenase family. It depends on FAD as a cofactor.

The protein operates within secondary metabolite biosynthesis. FAD-dependent monooxygenase; part of the cluster A that mediates the biosynthesis of azasperpyranones, members of the azaphilone family that exhibit anti-cancer activities. Azasperpyranones are synthesized by 2 clusters, A and B. Cluster A is responsible for the production of the polyhydric phenol moiety while the azaphilonoid scaffold is produced by the cluster B. The non-reducing polyketide synthase ATEG_03629 produces 5-methyl orsellinic acid, which is then reduced to 5-methyl orsellinic aldehyde by the NRPS-like protein ATEG_03630. 5-methyl orsellinic aldehyde is then first hydroxylated by the FAD-dependent monooxygenase ATEG_03635 and subsequently hydroxylated by the cytochrome P450 monooxygenase ATEG_03631 to produce the unstable polyhydric phenol precursor of azasperpyranones. On the other hand, the polyketide synthase ATEG_07659 is responsible for producing the 3,5-dimethyloctadienone moiety from acetyl-CoA, three malonyl-CoA, and two S-adenosyl methionines (SAM). The 3,5-dimethyloctadienone moiety is then loaded onto the SAT domain of ATEG_07661 and extended with four malonyl-CoA and one SAM, which leads to the formation of 2,4-dihydroxy-6-(5,7-dimethyl-2-oxo-trans-3-trans-5-nonadienyl)-3-methylbenzaldehyde (compound 8) after reductive release and aldol condensation. The FAD-dependent monooxygenase ATEG_07662 is the next enzyme in the biosynthesis sequence and hydroxylates the side chain at the benzylic position of compound 8. In Aspergillus nidulans, afoF, the ortholog of the FAD-dependent oxygenase ATEG_07660, is the key enzyme for the biosynthesis of asperfuranone by catalyzing the hydroxylation at C-8 of to prevent the formation of a six-membered ring hemiacetal intermediate and thus facilitating the formation of a five-membered ring to produce asperfuranone. In Aspergillus terreus, ATEG_07660 is probably not functional, which leads to the formation of the six-membered ring hemiacetal intermediate presperpyranone instead of asperfuranone. Finally, ATEG_03636 is involved in the condensation of the polyhydric phenol moiety produced by cluster A and the perasperpyranone precursor produced by cluster B, to yield azasperpyranone A. Further modifications of azasperpyranone A result in the production of derivatives, including azasperpyranone B to F. The sequence is that of FAD-dependent monooxygenase ATEG_03635 from Aspergillus terreus (strain NIH 2624 / FGSC A1156).